A 511-amino-acid polypeptide reads, in one-letter code: Ent-copalyl diphosphate synthase (511 aa).

A divalent metal cation-binding residues include Asp-291 and Asp-293. A DXDD motif motif is present at residues 291-294 (DSDD).

The protein belongs to the terpene synthase family. As to quaternary structure, homodimer. The cofactor is a divalent metal cation.

The catalysed reaction is (2E,6E,10E)-geranylgeranyl diphosphate = ent-copalyl diphosphate. It functions in the pathway antibiotic biosynthesis. Functionally, involved in viguiepinol biosynthesis. Catalyzes the conversion of geranylgeranyl diphosphate (GGDP) into copalyl diphosphate (ent-CDP). The polypeptide is Ent-copalyl diphosphate synthase (Streptomyces sp. (strain KO-3988)).